The sequence spans 309 residues: tRNA dimethylallyltransferase (309 aa).

G9 to T16 is an ATP binding site. T11–T16 provides a ligand contact to substrate. The tract at residues D34 to Q37 is interaction with substrate tRNA.

Belongs to the IPP transferase family. In terms of assembly, monomer. Requires Mg(2+) as cofactor.

It carries out the reaction adenosine(37) in tRNA + dimethylallyl diphosphate = N(6)-dimethylallyladenosine(37) in tRNA + diphosphate. Catalyzes the transfer of a dimethylallyl group onto the adenine at position 37 in tRNAs that read codons beginning with uridine, leading to the formation of N6-(dimethylallyl)adenosine (i(6)A). This is tRNA dimethylallyltransferase from Clostridium acetobutylicum (strain ATCC 824 / DSM 792 / JCM 1419 / IAM 19013 / LMG 5710 / NBRC 13948 / NRRL B-527 / VKM B-1787 / 2291 / W).